A 244-amino-acid polypeptide reads, in one-letter code: UPF0280 protein MJ1526 (244 aa).

Belongs to the UPF0280 family.

The chain is UPF0280 protein MJ1526 from Methanocaldococcus jannaschii (strain ATCC 43067 / DSM 2661 / JAL-1 / JCM 10045 / NBRC 100440) (Methanococcus jannaschii).